Here is a 429-residue protein sequence, read N- to C-terminus: UDP-N-acetylglucosamine 1-carboxyvinyltransferase (429 aa).

Lysine 22 to asparagine 23 is a binding site for phosphoenolpyruvate. Arginine 102 provides a ligand contact to UDP-N-acetyl-alpha-D-glucosamine. Residue cysteine 126 is the Proton donor of the active site. Cysteine 126 is subject to 2-(S-cysteinyl)pyruvic acid O-phosphothioketal. UDP-N-acetyl-alpha-D-glucosamine is bound by residues arginine 131–leucine 135, aspartate 316, and isoleucine 338.

Belongs to the EPSP synthase family. MurA subfamily.

The protein localises to the cytoplasm. The catalysed reaction is phosphoenolpyruvate + UDP-N-acetyl-alpha-D-glucosamine = UDP-N-acetyl-3-O-(1-carboxyvinyl)-alpha-D-glucosamine + phosphate. It participates in cell wall biogenesis; peptidoglycan biosynthesis. Its function is as follows. Cell wall formation. Adds enolpyruvyl to UDP-N-acetylglucosamine. This is UDP-N-acetylglucosamine 1-carboxyvinyltransferase from Rhodopseudomonas palustris (strain TIE-1).